Reading from the N-terminus, the 348-residue chain is Glycerol-1-phosphate dehydrogenase [NAD(P)+] (348 aa).

NAD(+)-binding positions include 94–98 (GKVID) and 116–119 (TTAS). D121 provides a ligand contact to substrate. S125 is an NAD(+) binding site. Position 168 (D168) interacts with substrate. The Zn(2+) site is built by D168 and H248. H252 is a binding site for substrate. H264 serves as a coordination point for Zn(2+).

The protein belongs to the glycerol-1-phosphate dehydrogenase family. As to quaternary structure, homooctamer. Zn(2+) is required as a cofactor.

The protein localises to the cytoplasm. The catalysed reaction is sn-glycerol 1-phosphate + NAD(+) = dihydroxyacetone phosphate + NADH + H(+). It catalyses the reaction sn-glycerol 1-phosphate + NADP(+) = dihydroxyacetone phosphate + NADPH + H(+). The protein operates within membrane lipid metabolism; glycerophospholipid metabolism. Its function is as follows. Catalyzes the NAD(P)H-dependent reduction of dihydroxyacetonephosphate (DHAP or glycerone phosphate) to glycerol 1-phosphate (G1P). The G1P thus generated is used as the glycerophosphate backbone of phospholipids in the cellular membranes of Archaea. The polypeptide is Glycerol-1-phosphate dehydrogenase [NAD(P)+] (Methanobrevibacter smithii (strain ATCC 35061 / DSM 861 / OCM 144 / PS)).